The primary structure comprises 223 residues: Neurotrophic factor BDNF precursor form (223 aa).

Positions 1 to 5 (SCMKA) are cleaved as a signal peptide. Residues 6–114 (APMKEVSIRG…AANMSMRVRR (109 aa)) constitute a propeptide that is removed on maturation. N107 is a glycosylation site (N-linked (GlcNAc...) asparagine). Intrachain disulfides connect C127–C194 and C172–C223.

The protein belongs to the NGF-beta family.

Its subcellular location is the secreted. Promotes the survival of neuronal populations that are all located either in the central nervous system or directly connected to it. The sequence is that of Neurotrophic factor BDNF precursor form (BDNF) from Lichanura trivirgata (Rosy boa).